The following is an 88-amino-acid chain: LYR motif-containing protein 2 (88 aa).

The transit peptide at 1-19 directs the protein to the mitochondrion; that stretch reads MAASRLPPATLTLKQFVRR.

This sequence belongs to the complex I LYR family.

Its subcellular location is the mitochondrion. In terms of biological role, involved in efficient integration of the N-module into mitochondrial respiratory chain complex I. The sequence is that of LYR motif-containing protein 2 (LYRM2) from Pongo abelii (Sumatran orangutan).